The primary structure comprises 211 residues: Small ribosomal subunit protein uS4 (211 aa).

Positions 27–48 (GRKVLERRGSQPPGQHGASVRR) are disordered. The S4 RNA-binding domain maps to 99 to 162 (RRLDNVVFRL…RKRDYFKDLE (64 aa)).

It belongs to the universal ribosomal protein uS4 family. As to quaternary structure, part of the 30S ribosomal subunit. Contacts protein S5. The interaction surface between S4 and S5 is involved in control of translational fidelity.

Its function is as follows. One of the primary rRNA binding proteins, it binds directly to 16S rRNA where it nucleates assembly of the body of the 30S subunit. Functionally, with S5 and S12 plays an important role in translational accuracy. In Herpetosiphon aurantiacus (strain ATCC 23779 / DSM 785 / 114-95), this protein is Small ribosomal subunit protein uS4.